Here is a 554-residue protein sequence, read N- to C-terminus: MRSNMIKKGIDRAPHRSLLRAAGVKEEDMDKPFIGVCNSYIDIIPGHMHLNKFAEVAKEAIIEAGGIPFEFNTIGVDDGIAMGHIGMRYSLPSREIICDAAETVINAHWFDGVFYIPNCDKITPGMLMAAVRTNVPAVFVSGGPMEAGRTKEGKSLSLVSVFEGVGAFSSGKMTREELLEIEQLACPTCGSCSGMFTANSMNSLMEMLGLALPGNGTLVATSTERHNLIKDAAKHLINLIEKDIRPRDIVTEETIDDAFALDMAMGGSTNTVLHTLAIANEAEIDYDLTRINEVAERVPYLCKISPASDYSMDDVHKAGGVAAIMKELIEMGAVKGDRITITGKSLYENVAHAQITNTDVIRTKETAYSPVGGLSILYGNLAPDGAVIKVGAVDPSIKTFTGEAIVFNSQEEAQEQINNGAVKEGQVVVIRYEGPKGGPGMPEMLAPTSAIQGRGLGTKVALITDGRFSGASRGISIGHISPEAAEGGPIAFVENGDMIKIDLIERTIEWEISEEELAKRREGWTEPEPKVKKGYLARYSKLVTSANTGGVMKI.

Mg(2+) is bound at residue Asp-78. Cys-119 serves as a coordination point for [2Fe-2S] cluster. Mg(2+) is bound by residues Asp-120 and Lys-121. Position 121 is an N6-carboxylysine (Lys-121). [2Fe-2S] cluster is bound at residue Cys-192. A Mg(2+)-binding site is contributed by Glu-443. Ser-469 serves as the catalytic Proton acceptor.

The protein belongs to the IlvD/Edd family. Homodimer. Requires [2Fe-2S] cluster as cofactor. It depends on Mg(2+) as a cofactor.

It catalyses the reaction (2R)-2,3-dihydroxy-3-methylbutanoate = 3-methyl-2-oxobutanoate + H2O. It carries out the reaction (2R,3R)-2,3-dihydroxy-3-methylpentanoate = (S)-3-methyl-2-oxopentanoate + H2O. The protein operates within amino-acid biosynthesis; L-isoleucine biosynthesis; L-isoleucine from 2-oxobutanoate: step 3/4. It functions in the pathway amino-acid biosynthesis; L-valine biosynthesis; L-valine from pyruvate: step 3/4. Its function is as follows. Functions in the biosynthesis of branched-chain amino acids. Catalyzes the dehydration of (2R,3R)-2,3-dihydroxy-3-methylpentanoate (2,3-dihydroxy-3-methylvalerate) into 2-oxo-3-methylpentanoate (2-oxo-3-methylvalerate) and of (2R)-2,3-dihydroxy-3-methylbutanoate (2,3-dihydroxyisovalerate) into 2-oxo-3-methylbutanoate (2-oxoisovalerate), the penultimate precursor to L-isoleucine and L-valine, respectively. The protein is Dihydroxy-acid dehydratase of Shouchella clausii (strain KSM-K16) (Alkalihalobacillus clausii).